A 455-amino-acid chain; its full sequence is Bifunctional protein GlmU (455 aa).

Residues Met-1 to Arg-227 form a pyrophosphorylase region. UDP-N-acetyl-alpha-D-glucosamine contacts are provided by residues Leu-8–Gly-11, Lys-22, Gln-73, Gly-78–Thr-79, Tyr-100–Asp-102, Gly-137, Glu-152, Asn-167, and Asn-225. A Mg(2+)-binding site is contributed by Asp-102. A Mg(2+)-binding site is contributed by Asn-225. The linker stretch occupies residues Trp-228 to Ala-248. The interval Gly-249 to Glu-455 is N-acetyltransferase. The UDP-N-acetyl-alpha-D-glucosamine site is built by Arg-332 and Lys-350. His-362 (proton acceptor) is an active-site residue. UDP-N-acetyl-alpha-D-glucosamine contacts are provided by Tyr-365 and Asn-376. Residues Ala-379, Asn-385–Tyr-386, Ser-404, Ala-422, and Arg-439 each bind acetyl-CoA.

In the N-terminal section; belongs to the N-acetylglucosamine-1-phosphate uridyltransferase family. This sequence in the C-terminal section; belongs to the transferase hexapeptide repeat family. As to quaternary structure, homotrimer. The cofactor is Mg(2+).

Its subcellular location is the cytoplasm. The enzyme catalyses alpha-D-glucosamine 1-phosphate + acetyl-CoA = N-acetyl-alpha-D-glucosamine 1-phosphate + CoA + H(+). It carries out the reaction N-acetyl-alpha-D-glucosamine 1-phosphate + UTP + H(+) = UDP-N-acetyl-alpha-D-glucosamine + diphosphate. The protein operates within nucleotide-sugar biosynthesis; UDP-N-acetyl-alpha-D-glucosamine biosynthesis; N-acetyl-alpha-D-glucosamine 1-phosphate from alpha-D-glucosamine 6-phosphate (route II): step 2/2. Its pathway is nucleotide-sugar biosynthesis; UDP-N-acetyl-alpha-D-glucosamine biosynthesis; UDP-N-acetyl-alpha-D-glucosamine from N-acetyl-alpha-D-glucosamine 1-phosphate: step 1/1. It participates in bacterial outer membrane biogenesis; LPS lipid A biosynthesis. In terms of biological role, catalyzes the last two sequential reactions in the de novo biosynthetic pathway for UDP-N-acetylglucosamine (UDP-GlcNAc). The C-terminal domain catalyzes the transfer of acetyl group from acetyl coenzyme A to glucosamine-1-phosphate (GlcN-1-P) to produce N-acetylglucosamine-1-phosphate (GlcNAc-1-P), which is converted into UDP-GlcNAc by the transfer of uridine 5-monophosphate (from uridine 5-triphosphate), a reaction catalyzed by the N-terminal domain. The protein is Bifunctional protein GlmU of Coxiella burnetii (strain Dugway 5J108-111).